An 86-amino-acid polypeptide reads, in one-letter code: UPF0297 protein BBR47_19030 (86 aa).

Belongs to the UPF0297 family.

The polypeptide is UPF0297 protein BBR47_19030 (Brevibacillus brevis (strain 47 / JCM 6285 / NBRC 100599)).